A 272-amino-acid polypeptide reads, in one-letter code: Large ribosomal subunit protein uL2 (272 aa).

The disordered stretch occupies residues 222-272 (GVAMNPIDHPLGGGEGKSSGGRAACTPWGKPEGVKTRKNKRTDKFIIKRRK). Residues 263 to 272 (TDKFIIKRRK) show a composition bias toward basic and acidic residues.

Belongs to the universal ribosomal protein uL2 family. In terms of assembly, part of the 50S ribosomal subunit. Forms a bridge to the 30S subunit in the 70S ribosome.

In terms of biological role, one of the primary rRNA binding proteins. Required for association of the 30S and 50S subunits to form the 70S ribosome, for tRNA binding and peptide bond formation. It has been suggested to have peptidyltransferase activity; this is somewhat controversial. Makes several contacts with the 16S rRNA in the 70S ribosome. In Thermodesulfovibrio yellowstonii (strain ATCC 51303 / DSM 11347 / YP87), this protein is Large ribosomal subunit protein uL2.